Reading from the N-terminus, the 885-residue chain is 3-hydroxy-3-methylglutaryl-coenzyme A reductase (885 aa).

Topologically, residues 1 to 9 (MLSRLFRMH) are cytoplasmic. A helical transmembrane segment spans residues 10–39 (GLFVASHPWEVIVGTVTLTICMMSMNMFTG). The Lumenal portion of the chain corresponds to 40–56 (NDKICGWNYECPKFEED). Residues 57 to 78 (VLSSDIIILTITRCIAILYIYF) traverse the membrane as a helical segment. An SSD domain is found at 61-218 (DIIILTITRC…MTFFPACVSL (158 aa)). An INSIG-binding motif motif is present at residues 75-78 (YIYF). The Cytoplasmic segment spans residues 79–89 (QFQNLRQLGSK). Lys-89 is covalently cross-linked (Glycyl lysine isopeptide (Lys-Gly) (interchain with G-Cter in ubiquitin)). Residues 90-114 (YILGIAGLFTIFSSFVFSTVVIHFL) traverse the membrane as a helical segment. Topologically, residues 115 to 123 (DKELTGLNE) are lumenal. Residues 124–149 (ALPFFLLLIDLSRASALAKFALSSNS) form a helical membrane-spanning segment. The Cytoplasmic segment spans residues 150-159 (QDEVRENIAR). Residues 160-187 (GMAILGPTFTLDALVECLVIGVGTMSGV) traverse the membrane as a helical segment. The Lumenal portion of the chain corresponds to 188-191 (RQLE). The helical transmembrane segment at 192-220 (IMCCFGCMSVLATYFVFMTFFPACVSLVL) threads the bilayer. Residues 221–248 (ELSRESREGRPIWQLSHFARVLEGEENK) lie on the Cytoplasmic side of the membrane. Residue Lys-248 forms a Glycyl lysine isopeptide (Lys-Gly) (interchain with G-Cter in ubiquitin) linkage. The helical transmembrane segment at 249-275 (PNPVTQRVKIIMSLGLVLVHAHSRWIA) threads the bilayer. At 276-314 (DPSPQNSTADNSKVSLGLDENVSKRIEPSVSLWQFYLSK) the chain is on the lumenal side. Asn-281 and Asn-296 each carry an N-linked (GlcNAc...) asparagine glycan. Residues 315 to 339 (MISMDIEQVITLTLALLLAVKYIFF) form a helical membrane-spanning segment. Residues 340–885 (EQAETESTLS…LQGTCTKKAA (546 aa)) are Cytoplasmic-facing. Active-site charge relay system residues include Glu-558, Lys-688, and Asp-764. His-863 serves as the catalytic Proton donor. Residue Ser-869 is modified to Phosphoserine; by AMPK.

The protein belongs to the HMG-CoA reductase family. As to quaternary structure, homotetramer. Homodimer. Interacts (via its SSD) with INSIG1; the interaction, accelerated by sterols, leads to the recruitment of HMGCR to AMFR/gp78 for its ubiquitination by the sterol-mediated ERAD pathway. Interacts with UBIAD1. Post-translationally, undergoes sterol-mediated ubiquitination and ER-associated degradation (ERAD). Accumulation of sterols in the endoplasmic reticulum (ER) membrane, triggers binding of the reductase to the ER membrane protein INSIG1 or INSIG2. The INSIG1 binding leads to the recruitment of the ubiquitin ligase, AMFR/gp78, RNF139 or RNF145, initiating ubiquitination of the reductase. The ubiquitinated reductase is then extracted from the ER membrane and delivered to cytosolic 26S proteosomes by a mechanism probably mediated by the ATPase Valosin-containing protein VCP/p97. The INSIG2-binding leads to the recruitment of the ubiquitin ligase RNF139, initiating ubiquitination of the reductase. Lys-248 is the main site of ubiquitination. Ubiquitination is enhanced by the presence of a geranylgeranylated protein. N-glycosylated. Deglycosylated by NGLY1 on release from the endoplasmic reticulum (ER) in a sterol-mediated manner. In terms of processing, phosphorylated. Phosphorylation at Ser-869 reduces the catalytic activity. In terms of tissue distribution, high expression found in liver, heart, kidney, bladder and subcutaneous fat. Lower levels in lung, uterus and large intestine. Lowest levels in cerebrum, spleen, spinal cord, stomach, ovary, longissimus muscle, and small intestine.

The protein localises to the endoplasmic reticulum membrane. It is found in the peroxisome membrane. It carries out the reaction (R)-mevalonate + 2 NADP(+) + CoA = (3S)-3-hydroxy-3-methylglutaryl-CoA + 2 NADPH + 2 H(+). The protein operates within metabolic intermediate biosynthesis; (R)-mevalonate biosynthesis; (R)-mevalonate from acetyl-CoA: step 3/3. Regulated by a negative feedback mechanism through sterols and non-sterol metabolites derived from mevalonate. Phosphorylation at Ser-869 down-regulates the catalytic activity. Its function is as follows. Catalyzes the conversion of (3S)-hydroxy-3-methylglutaryl-CoA (HMG-CoA) to mevalonic acid, the rate-limiting step in the synthesis of cholesterol and other isoprenoids, thus plays a critical role in cellular cholesterol homeostasis. The chain is 3-hydroxy-3-methylglutaryl-coenzyme A reductase (HMGCR) from Sus scrofa (Pig).